The following is a 735-amino-acid chain: Protostadienol synthase A (735 aa).

One copy of the PFTB 1 repeat lies at 129–170; sequence KNEMIRYLLNFVNEDGGWGLWINSPSTVFGTTMNYTMLRILG. The Proton donor role is filled by D460. PFTB repeat units follow at residues 487-528, 564-604, and 613-660; these read LAEA…YDNV, MARC…ETVG, and CRNA…ALMG.

The protein belongs to the terpene cyclase/mutase family.

The catalysed reaction is (S)-2,3-epoxysqualene = (17Z)-protosta-17(20),24-dien-3beta-ol. Its function is as follows. Protostadienol synthase which cyclizes (3S)-oxidosqualene to (17Z)-protosta-17(20),24-dien-3-beta-ol (protostadienol), the biosynthetic precursor of helvolic acid, a secondary metabolite which promotes virulence. The chain is Protostadienol synthase A (PDSA) from Arthroderma gypseum (strain ATCC MYA-4604 / CBS 118893) (Microsporum gypseum).